We begin with the raw amino-acid sequence, 300 residues long: Ribonuclease HIII (300 aa).

Residues R86–Q300 form the RNase H type-2 domain. Positions 92, 93, and 196 each coordinate a divalent metal cation.

It belongs to the RNase HII family. RnhC subfamily. It depends on Mn(2+) as a cofactor. Mg(2+) serves as cofactor.

It localises to the cytoplasm. It catalyses the reaction Endonucleolytic cleavage to 5'-phosphomonoester.. Functionally, endonuclease that specifically degrades the RNA of RNA-DNA hybrids. This is Ribonuclease HIII from Chlamydia trachomatis serovar L2 (strain ATCC VR-902B / DSM 19102 / 434/Bu).